A 484-amino-acid polypeptide reads, in one-letter code: Cysteine desulfurase, mitochondrial (484 aa).

Low complexity predominate over residues 29–42; the sequence is LATSASTSSSTTTS. The interval 29 to 69 is disordered; sequence LATSASTSSSTTTSNAETGELHVSTPLDSPSVHPPDGSSIS. Pyridoxal 5'-phosphate-binding positions include 153 to 154, N233, Q261, and 281 to 283; these read AT and SSH. K284 bears the N6-(pyridoxal phosphate)lysine mark. T321 is a binding site for pyridoxal 5'-phosphate. C408 acts as the Cysteine persulfide intermediate in catalysis. Residue C408 participates in [2Fe-2S] cluster binding.

It belongs to the class-V pyridoxal-phosphate-dependent aminotransferase family. NifS/IscS subfamily. Pyridoxal 5'-phosphate is required as a cofactor.

The protein resides in the mitochondrion. It carries out the reaction (sulfur carrier)-H + L-cysteine = (sulfur carrier)-SH + L-alanine. Catalyzes the removal of elemental sulfur from cysteine to produce alanine. It supplies the inorganic sulfur for iron-sulfur (Fe-S) clusters. Plays a role in both tRNA-processing and mitochondrial metabolism. Involved in the 2-thio-modification of both 5-carboxymethylaminomethyl-2-thiouridine in mitochondrial tRNAs and 5-methoxycarbonylmethyl-2-thiouridine (mcm5s2U) in cytoplasmic tRNAs. The sequence is that of Cysteine desulfurase, mitochondrial from Candida maltosa (Yeast).